We begin with the raw amino-acid sequence, 2157 residues long: Unconventional myosin-IXb (2157 aa).

Ser-2 carries the N-acetylserine modification. Residues 15–114 (AAYHLHIYPQ…YYFLLQERNA (100 aa)) form the Ras-associating domain. Residues 146–953 (ADFDDLCNLP…ERQALQETLH (808 aa)) enclose the Myosin motor domain. 239–246 (GESGSGKT) is a binding site for ATP. Residues 709–734 (AEKAAGMSSPGAQSHPEELPRGASTP) form a disordered region. Ser-716 and Ser-717 each carry phosphoserine. An actin-binding region spans residues 844–855 (KAEPFFIRCIRS). The neck or regulatory domain stretch occupies residues 940 to 1044 (LKETERQALQ…CRGHLQRKSF (105 aa)). 4 consecutive IQ domains span residues 957–977 (VRKI…RHFL), 979–1000 (MKRA…RALE), 1001–1023 (RTQA…LYRH), and 1024–1053 (QKQS…EKQK). Phosphoserine is present on Ser-1045. A tail region spans residues 1045–2157 (SQMISEKQKA…LPPASGQTNG (1113 aa)). Residues 1046–1071 (QMISEKQKAEEKEREALEAARAGAEE) are a coiled coil. Disordered regions lie at residues 1046 to 1298 (QMIS…TQIQ), 1320 to 1410 (AAAS…GSQV), and 1455 to 1484 (GLEA…KKNR). 5 stretches are compositionally biased toward basic and acidic residues: residues 1050–1063 (EKQK…EALE), 1109–1122 (SPLE…EAPS), 1136–1160 (ESHE…EHVK), 1168–1183 (SCKE…RRVT), and 1191–1201 (LEDKKESREDE). Ser-1114, Ser-1115, and Ser-1122 each carry phosphoserine. Residues 1211-1222 (ENTSQKQPTEQP) show a composition bias toward polar residues. 4 positions are modified to phosphoserine: Ser-1242, Ser-1253, Ser-1261, and Ser-1267. Thr-1271 is subject to Phosphothreonine. A phosphoserine mark is found at Ser-1290, Ser-1323, and Ser-1331. Position 1346 is a phosphothreonine (Thr-1346). A phosphoserine mark is found at Ser-1354, Ser-1356, and Ser-1405. A compositionally biased stretch (basic and acidic residues) spans 1467–1478 (AAGEKRTKEPGG). The segment at 1632 to 1681 (GHVFASYQVSIPQSCEQCLSYIWLMDKALLCSVCKMTCHKKCVHKIQSHC) adopts a Phorbol-ester/DAG-type zinc-finger fold. In terms of domain architecture, Rho-GAP spans 1703–1888 (DSLTSDKASV…MLIKEQMRKY (186 aa)). Positions 1739–1744 (AANRTR) are interaction with RHOA. Positions 1880–1901 (LIKEQMRKYKVKMEEISQLEAA) form a coiled coil. 4 positions are modified to phosphoserine: Ser-1926, Ser-1972, Ser-1992, and Ser-1999. Residues 1959–1989 (EDREKEILIERIQSIKEEKEDITYRLPELDP) are a coiled coil. The span at 1980-1993 (ITYRLPELDPRGSD) shows a compositional bias: basic and acidic residues. Positions 1980–2157 (ITYRLPELDP…LPPASGQTNG (178 aa)) are disordered. Thr-2005 carries the phosphothreonine modification. Over residues 2021–2037 (PPAPALPCPGAPTPSPL) the composition is skewed to pro residues. Phosphoserine is present on Ser-2050. The span at 2081–2093 (PRWAPGAREAAAP) shows a compositional bias: low complexity. Residues 2095 to 2106 (RRREPPARRPDQ) are compositionally biased toward basic and acidic residues. Ser-2141 bears the Phosphoserine mark.

Belongs to the TRAFAC class myosin-kinesin ATPase superfamily. Myosin family. Interacts (via IQ domains) with CALM. Interacts with RHOA. Interacts (via Rho-GAP domain) with ROBO1; this inhibits the interaction with RHOA and the stimulation of RHOA GTPase activity, and thereby increases the levels of active RHOA. In terms of tissue distribution, detected in peripheral blood leukocytes (at protein level). Expressed predominantly in peripheral blood leukocytes and at lower levels, in thymus, spleen, testis, prostate, ovary, brain, small intestine and lung.

It is found in the cytoplasm. Its subcellular location is the cell cortex. The protein localises to the perinuclear region. It localises to the cytoskeleton. Myosins are actin-based motor molecules with ATPase activity. Unconventional myosins serve in intracellular movements. Binds actin with high affinity both in the absence and presence of ATP and its mechanochemical activity is inhibited by calcium ions. Also acts as a GTPase activator for RHOA. Plays a role in the regulation of cell migration via its role as RHOA GTPase activator. This is regulated by its interaction with the SLIT2 receptor ROBO1; interaction with ROBO1 impairs interaction with RHOA and subsequent activation of RHOA GTPase activity, and thereby leads to increased levels of active, GTP-bound RHOA. This chain is Unconventional myosin-IXb (MYO9B), found in Homo sapiens (Human).